The primary structure comprises 327 residues: Phenylalanine--tRNA ligase alpha subunit (327 aa).

Glutamate 252 serves as a coordination point for Mg(2+).

Belongs to the class-II aminoacyl-tRNA synthetase family. Phe-tRNA synthetase alpha subunit type 1 subfamily. As to quaternary structure, tetramer of two alpha and two beta subunits. Requires Mg(2+) as cofactor.

It is found in the cytoplasm. The enzyme catalyses tRNA(Phe) + L-phenylalanine + ATP = L-phenylalanyl-tRNA(Phe) + AMP + diphosphate + H(+). The sequence is that of Phenylalanine--tRNA ligase alpha subunit from Shewanella sp. (strain MR-7).